The primary structure comprises 176 residues: WASH complex subunit 3 (176 aa).

The stretch at 47 to 74 (ETKFVEMERQLQKTEAALIILEAKLASI) forms a coiled coil. 2 disordered regions span residues 84-123 (ATEAPAISNQQRNEEASMVDTTEPPTTENPTEPELPPESV) and 152-176 (KMQSEGLEPRILDTPDLILADGQRE). The span at 104-115 (TTEPPTTENPTE) shows a compositional bias: low complexity.

Belongs to the CCDC53 family. As to quaternary structure, component of the WASH complex.

Its subcellular location is the early endosome. Its function is as follows. Acts at least in part as component of the WASH complex which may regulate wash nucleation-promoting factor (NPF) activity and is required for its membrane targeting during endosomal sorting. During embryogenesis, not involved in the wash-dependent developmental migration of hemocytes anteriorly from the tail. The polypeptide is WASH complex subunit 3 (Drosophila melanogaster (Fruit fly)).